Consider the following 395-residue polypeptide: Elongation factor Tu (395 aa).

The tr-type G domain occupies 10–205; that stretch reads KPHVNIGTIG…VDNWIPIPPR (196 aa). Residues 19–26 form a G1 region; the sequence is GHVDHGKT. 19–26 contributes to the GTP binding site; it reads GHVDHGKT. Threonine 26 is a Mg(2+) binding site. The segment at 60–64 is G2; that stretch reads GITIN. The interval 81 to 84 is G3; it reads DCPG. GTP contacts are provided by residues 81–85 and 136–139; these read DCPGH and NKVD. A G4 region spans residues 136–139; sequence NKVD. Residues 174-176 form a G5 region; it reads SAL.

Belongs to the TRAFAC class translation factor GTPase superfamily. Classic translation factor GTPase family. EF-Tu/EF-1A subfamily. In terms of assembly, monomer.

The protein localises to the cytoplasm. It catalyses the reaction GTP + H2O = GDP + phosphate + H(+). Its function is as follows. GTP hydrolase that promotes the GTP-dependent binding of aminoacyl-tRNA to the A-site of ribosomes during protein biosynthesis. This Hymenobacter ocellatus (Parahymenobacter ocellatus) protein is Elongation factor Tu.